The sequence spans 215 residues: Protein ERP2 (215 aa).

The signal sequence occupies residues 1–25 (MIKSTIALPSFFIVLILALVNSVAA). The Lumenal segment spans residues 26–182 (SSSYAPVAIS…TVNSTESRLT (157 aa)). Positions 41–123 (KECLYYDMVT…LKKVEITLEK (83 aa)) constitute a GOLD domain. A helical transmembrane segment spans residues 183–203 (WLSILIIIIIAVISIAQVLLI). At 204 to 215 (QFLFTGRQKNYV) the chain is on the cytoplasmic side.

This sequence belongs to the EMP24/GP25L family. As to quaternary structure, associates with EMP24, ERV25 and ERP1.

The protein localises to the endoplasmic reticulum membrane. In terms of biological role, involved in vesicular protein trafficking. This chain is Protein ERP2 (ERP2), found in Saccharomyces cerevisiae (strain ATCC 204508 / S288c) (Baker's yeast).